Here is a 587-residue protein sequence, read N- to C-terminus: Inorganic phosphate transporter 2-1, chloroplastic (587 aa).

The N-terminal 71 residues, 1–71 (MTLPYRFSSV…VCPLASFSSY (71 aa)), are a transit peptide targeting the chloroplast. A disordered region spans residues 74–106 (SEGEEQHHADQPIQNPHESSTVSNESDGKGNAE). Over residues 85 to 98 (PIQNPHESSTVSNE) the composition is skewed to polar residues. 12 consecutive transmembrane segments (helical) span residues 127–147 (AISI…KSLG), 154–174 (TKLL…NIGA), 195–215 (AVMT…THVT), 233–253 (MLLF…LQVA), 265–285 (CIVG…AVFW), 289–309 (AKVA…SFLV), 327–347 (AAAA…SAAL), 352–372 (IFPI…IVFD), 413–433 (LEIV…FMSF), 465–485 (IVIP…GLTM), 523–543 (LGLP…VGFA), and 559–579 (ASWL…TWIF).

The protein belongs to the inorganic phosphate transporter (PiT) (TC 2.A.20.2) family. As to expression, mostly expressed in young green tissues. Present in both auto- and heterotrophic tissues. Also expressed in root stele.

It is found in the plastid. It localises to the chloroplast inner membrane. In terms of biological role, low affinity H(+)/Pi chloroplastic cotransporter. Involved in inorganic phosphate (orthophosphate, Pi) uptake in green parts of plants in Pi-sufficient conditions. Required for Pi retranslocation during Pi deprivation. The chain is Inorganic phosphate transporter 2-1, chloroplastic (PHT2-1) from Arabidopsis thaliana (Mouse-ear cress).